We begin with the raw amino-acid sequence, 356 residues long: Tyrosine recombinase XerS (356 aa).

Residues 16 to 121 (VMPPYVLEYY…ALSSLYKYLT (106 aa)) enclose the Core-binding (CB) domain. The Tyr recombinase domain occupies 169–354 (GFLDYIDSEY…INEEQKNALD (186 aa)). Active-site residues include Arg-210, Lys-234, His-306, Arg-309, and His-332. The active-site O-(3'-phospho-DNA)-tyrosine intermediate is Tyr-341.

This sequence belongs to the 'phage' integrase family. XerS subfamily.

Its subcellular location is the cytoplasm. With respect to regulation, ftsK is required for recombination. Site-specific tyrosine recombinase, which acts by catalyzing the cutting and rejoining of the recombining DNA molecules. Essential to convert dimers of the bacterial chromosome into monomers to permit their segregation at cell division. The polypeptide is Tyrosine recombinase XerS (Lactococcus lactis subsp. cremoris (strain SK11)).